Here is a 354-residue protein sequence, read N- to C-terminus: uncharacterized protein (354 aa).

The region spanning 48–285 (VETWEISKIY…DEGYEVVLKG (238 aa)) is the ABC transporter domain. 87–94 (GPNGAGKT) provides a ligand contact to ATP.

The protein belongs to the ABC transporter superfamily.

This is an uncharacterized protein from Synechocystis sp. (strain ATCC 27184 / PCC 6803 / Kazusa).